A 432-amino-acid polypeptide reads, in one-letter code: MAKNVVVIGAQWGDEGKGKIVDWLAEEAGGVVRFQGGHNAGHTLVVGGKKTILRLIPSGILHEGLDCFIGSGVVVSPEALLGEIDELNAAGVKNVEGRLKIAPTCPLILPYHIALDQAREASRGKGKIGTTGRGIGPAYEDKVARRAIRAADLLHPEKLREKLDAVLAYYNVQLQYLHNAGPVKAEDVMAVIEKVAPRIAPMIADVSRVLNEKNKNGEKLLFEGAQGALLDIDYGTYPFVTSSNCLAGAASAGAGVGPQMLDYVLGIVKAYTTRVGSGPFPTELFDEVGAGLAERGHEFGSVTGRARRCGWFDAAALKRSIQINGISGMCITKLDVMDGVETINICVGYELPGGGKTDILPCGSDAVETCKPIYETMPGWRESTVGVKSYDALPANAKAYLKRIEEVCGAPVAIVSTGPDREETIVLHHPFA.

GTP-binding positions include 13–19 and 41–43; these read GDEGKGK and GHT. Asp-14 (proton acceptor) is an active-site residue. Asp-14 and Gly-41 together coordinate Mg(2+). Residues 14–17, 39–42, Thr-131, Arg-145, Gln-226, Thr-241, and Arg-305 each bind IMP; these read DEGK and NAGH. The active-site Proton donor is His-42. Residue 301–307 coordinates substrate; that stretch reads SVTGRAR. GTP contacts are provided by residues Arg-307, 333–335, and 416–418; these read KLD and STG.

This sequence belongs to the adenylosuccinate synthetase family. As to quaternary structure, homodimer. It depends on Mg(2+) as a cofactor.

The protein localises to the cytoplasm. It carries out the reaction IMP + L-aspartate + GTP = N(6)-(1,2-dicarboxyethyl)-AMP + GDP + phosphate + 2 H(+). Its pathway is purine metabolism; AMP biosynthesis via de novo pathway; AMP from IMP: step 1/2. Functionally, plays an important role in the de novo pathway of purine nucleotide biosynthesis. Catalyzes the first committed step in the biosynthesis of AMP from IMP. The chain is Adenylosuccinate synthetase from Neisseria gonorrhoeae (strain ATCC 700825 / FA 1090).